Consider the following 265-residue polypeptide: Capsule polysaccharide export inner-membrane protein BexB (265 aa).

Transmembrane regions (helical) follow at residues Ile-37 to Trp-57, Lys-64 to Trp-84, Leu-118 to Ile-138, Leu-151 to Ile-171, Phe-178 to Phe-198, and Glu-235 to Val-255. The region spanning Ile-37–Phe-258 is the ABC transmembrane type-2 domain.

The protein belongs to the ABC-2 integral membrane protein family.

It localises to the cell inner membrane. Its function is as follows. May form an ATP-driven capsule polysaccharide export apparatus, in association with the BexA, BexC and BexD proteins. The sequence is that of Capsule polysaccharide export inner-membrane protein BexB (bexB) from Haemophilus influenzae.